A 385-amino-acid polypeptide reads, in one-letter code: U6 small nuclear RNA (adenine-(43)-N(6))-methyltransferase (385 aa).

S-adenosyl-L-methionine is bound by residues Arg-54, Gly-83, Glu-106, and Asn-155.

It belongs to the methyltransferase superfamily. METTL16/RlmF family.

Its subcellular location is the cytoplasm. It is found in the nucleus. It carries out the reaction adenosine in U6 snRNA + S-adenosyl-L-methionine = N(6)-methyladenosine in U6 snRNA + S-adenosyl-L-homocysteine + H(+). Functionally, RNA N6-methyltransferase that mediates N6-methylation of adenine of U6 small nuclear RNA (U6 snRNA). This Schizosaccharomyces pombe (strain 972 / ATCC 24843) (Fission yeast) protein is U6 small nuclear RNA (adenine-(43)-N(6))-methyltransferase.